The following is a 539-amino-acid chain: Dihydrolipoyllysine-residue acetyltransferase component 3 of pyruvate dehydrogenase complex, mitochondrial (539 aa).

The N-terminal 102 residues, 1–102 (MAYASRIINH…SCLMQSARGF (102 aa)), are a transit peptide targeting the mitochondrion. The region spanning 111-187 (HQEIGMPSLS…QVGEVIAITV (77 aa)) is the Lipoyl-binding domain. Residue Lys-152 is modified to N6-lipoyllysine. Residues 195–247 (KFKDYTPSSTADAAPTKAEPTPAPPKEEKVKQPSSPPEPKASKPSTPPTGDRV) are disordered. Low complexity predominate over residues 204-214 (TADAAPTKAEP). The region spanning 248–285 (FASPLARKLAEDNNVPLSDIEGTGPEGRIVKADIDEYL) is the Peripheral subunit-binding (PSBD) domain. Residues His-512 and Asp-516 contribute to the active site.

This sequence belongs to the 2-oxoacid dehydrogenase family. The cofactor is (R)-lipoate.

It localises to the mitochondrion matrix. The enzyme catalyses N(6)-[(R)-dihydrolipoyl]-L-lysyl-[protein] + acetyl-CoA = N(6)-[(R)-S(8)-acetyldihydrolipoyl]-L-lysyl-[protein] + CoA. Functionally, the pyruvate dehydrogenase complex catalyzes the overall conversion of pyruvate to acetyl-CoA and CO(2). It contains multiple copies of three enzymatic components: pyruvate dehydrogenase (E1), dihydrolipoamide acetyltransferase (E2) and lipoamide dehydrogenase (E3). The protein is Dihydrolipoyllysine-residue acetyltransferase component 3 of pyruvate dehydrogenase complex, mitochondrial of Arabidopsis thaliana (Mouse-ear cress).